A 455-amino-acid polypeptide reads, in one-letter code: Putative PTS system EIIBC component YbbF (455 aa).

One can recognise a PTS EIIB type-1 domain in the interval His-8–Ala-90. The active-site Phosphocysteine intermediate; for EIIB activity is Cys-30. Residues Arg-116–Asp-455 form the PTS EIIC type-1 domain. Transmembrane regions (helical) follow at residues Ile-118 to Ile-138, Ile-154 to Gly-174, Phe-181 to Ala-201, Leu-210 to Thr-230, Val-250 to Ile-270, Ile-281 to Val-301, Leu-325 to Val-345, Ala-355 to Val-375, Tyr-399 to Leu-419, and Ile-423 to Ala-443.

The protein resides in the cell membrane. Functionally, the phosphoenolpyruvate-dependent sugar phosphotransferase system (sugar PTS), a major carbohydrate active -transport system, catalyzes the phosphorylation of incoming sugar substrates concomitantly with their translocation across the cell membrane. This is Putative PTS system EIIBC component YbbF (ybbF) from Bacillus subtilis (strain 168).